The sequence spans 210 residues: T-cell surface glycoprotein CD8 beta chain (210 aa).

A signal peptide spans 1 to 21 (MRPRLWLLLAAQLTVLHGNSV). Residues 22-132 (LQQTPAYIKV…ELTFGKGTQL (111 aa)) enclose the Ig-like V-type domain. At 22-170 (LQQTPAYIKV…ETQKGPLCSP (149 aa)) the chain is on the extracellular side. Cys-41 and Cys-116 are joined by a disulfide. Residue Asn-102 is glycosylated (N-linked (GlcNAc...) asparagine). A helical membrane pass occupies residues 171–191 (ITLGLLVAGVLVLLVSLGVAI). Over 192–210 (HLCCRRRRARLRFMKQFYK) the chain is Cytoplasmic. Tyr-209 is subject to Phosphotyrosine.

As to quaternary structure, forms disulfide-linked heterodimers with CD8A at the cell surface. Interacts with CD3D; this interaction couples TCR-CD3 with CD8. Interacts with LCK. Phosphorylated as a consequence of T-cell activation. Post-translationally, palmitoylated at the cytoplasmic tail and thereby targets the heterodimer CD8A/CD8B to lipid rafts unlike CD8A homodimers. As to expression, isoform 1, isoform 3, isoform 5, isoform 6, isoform 7 and isoform 8 are expressed in both thymus and peripheral CD8+ T-cells. Expression of isoform 1 is higher in thymus CD8+ T-cells than in peripheral CD8+ T-cells. Expression of isoform 6 is higher in peripheral CD8+ T-cells than in thymus CD8+ T-cells.

The protein localises to the cell membrane. The protein resides in the secreted. Its function is as follows. Integral membrane glycoprotein that plays an essential role in the immune response and serves multiple functions in responses against both external and internal offenses. In T-cells, functions primarily as a coreceptor for MHC class I molecule:peptide complex. The antigens presented by class I peptides are derived from cytosolic proteins while class II derived from extracellular proteins. Interacts simultaneously with the T-cell receptor (TCR) and the MHC class I proteins presented by antigen presenting cells (APCs). In turn, recruits the Src kinase LCK to the vicinity of the TCR-CD3 complex. A palmitoylation site in the cytoplasmic tail of CD8B chain contributes to partitioning of CD8 into the plasma membrane lipid rafts where signaling proteins are enriched. Once LCK recruited, it initiates different intracellular signaling pathways by phosphorylating various substrates ultimately leading to lymphokine production, motility, adhesion and activation of cytotoxic T-lymphocytes (CTLs). Additionally, plays a critical role in thymic selection of CD8+ T-cells. The polypeptide is T-cell surface glycoprotein CD8 beta chain (CD8B) (Homo sapiens (Human)).